The primary structure comprises 280 residues: Biotin carboxyl carrier protein of acetyl-CoA carboxylase 1, chloroplastic (280 aa).

Residues 1–82 (MASSSFSVTS…SNAAKVDGPS (82 aa)) constitute a chloroplast transit peptide. The segment covering 52 to 75 (PSRSSYPVVKAQSNKVSTGASSNA) has biased composition (polar residues). 2 disordered regions span residues 52–106 (PSRS…ATEE) and 164–215 (QPSY…GTFY). Positions 177–188 (PAAAAPAPSTPA) are enriched in low complexity. Residues 189–198 (SLPPPSPPTP) show a composition bias toward pro residues. In terms of domain architecture, Biotinyl-binding spans 203 to 279 (LPTVKSPMAG…SLDTPLFVVQ (77 aa)). Lys245 bears the N6-biotinyllysine mark.

Acetyl-CoA carboxylase is a heterohexamer composed of biotin carboxyl carrier protein, biotin carboxylase and 2 subunits each of ACCase subunit alpha and ACCase plastid-coded subunit beta (accD). In terms of tissue distribution, present in developing tissues from roots, leaves, flowers, siliques and seeds (at protein level).

It localises to the plastid. It is found in the chloroplast. It functions in the pathway lipid metabolism; fatty acid biosynthesis. In terms of biological role, this protein is a component of the acetyl coenzyme A carboxylase complex; first, biotin carboxylase catalyzes the carboxylation of the carrier protein and then the transcarboxylase transfers the carboxyl group to form malonyl-CoA. In Arabidopsis thaliana (Mouse-ear cress), this protein is Biotin carboxyl carrier protein of acetyl-CoA carboxylase 1, chloroplastic (BCCP1).